Consider the following 503-residue polypeptide: Aspartyl/glutamyl-tRNA(Asn/Gln) amidotransferase subunit B (503 aa).

Belongs to the GatB/GatE family. GatB subfamily. As to quaternary structure, heterotrimer of A, B and C subunits.

The catalysed reaction is L-glutamyl-tRNA(Gln) + L-glutamine + ATP + H2O = L-glutaminyl-tRNA(Gln) + L-glutamate + ADP + phosphate + H(+). It carries out the reaction L-aspartyl-tRNA(Asn) + L-glutamine + ATP + H2O = L-asparaginyl-tRNA(Asn) + L-glutamate + ADP + phosphate + 2 H(+). Its function is as follows. Allows the formation of correctly charged Asn-tRNA(Asn) or Gln-tRNA(Gln) through the transamidation of misacylated Asp-tRNA(Asn) or Glu-tRNA(Gln) in organisms which lack either or both of asparaginyl-tRNA or glutaminyl-tRNA synthetases. The reaction takes place in the presence of glutamine and ATP through an activated phospho-Asp-tRNA(Asn) or phospho-Glu-tRNA(Gln). The polypeptide is Aspartyl/glutamyl-tRNA(Asn/Gln) amidotransferase subunit B (Ruegeria pomeroyi (strain ATCC 700808 / DSM 15171 / DSS-3) (Silicibacter pomeroyi)).